Consider the following 605-residue polypeptide: FAD-linked oxidoreductase easE (605 aa).

Positions 1–20 (MRHFVTFVVGFLLSWGFLSS) are cleaved as a signal peptide. N-linked (GlcNAc...) asparagine glycosylation is found at Asn46 and Asn105. One can recognise an FAD-binding PCMH-type domain in the interval 122–307 (CHQGRLPLYS…TQATVRAFPD (186 aa)). An N-linked (GlcNAc...) asparagine glycan is attached at Asn370.

This sequence belongs to the oxygen-dependent FAD-linked oxidoreductase family. It depends on FAD as a cofactor.

The protein operates within alkaloid biosynthesis; ergot alkaloid biosynthesis. In terms of biological role, FAD-linked oxidoreductase; part of the gene cluster that mediates the biosynthesis of fungal ergot alkaloid ergovaline, the predominant ergopeptine product in E.festucae var. lolii. DmaW catalyzes the first step of ergot alkaloid biosynthesis by condensing dimethylallyl diphosphate (DMAP) and tryptophan to form 4-dimethylallyl-L-tryptophan. The second step is catalyzed by the methyltransferase easF that methylates 4-dimethylallyl-L-tryptophan in the presence of S-adenosyl-L-methionine, resulting in the formation of 4-dimethylallyl-L-abrine. The catalase easC and the FAD-dependent oxidoreductase easE then transform 4-dimethylallyl-L-abrine to chanoclavine-I which is further oxidized by easD in the presence of NAD(+), resulting in the formation of chanoclavine-I aldehyde. Agroclavine dehydrogenase easG then mediates the conversion of chanoclavine-I aldehyde to agroclavine via a non-enzymatic adduct reaction: the substrate is an iminium intermediate that is formed spontaneously from chanoclavine-I aldehyde in the presence of glutathione. The presence of easA is not required to complete this reaction. Further conversion of agroclavine to paspalic acid is a two-step process involving oxidation of agroclavine to elymoclavine and of elymoclavine to paspalic acid, the second step being performed by the elymoclavine oxidase cloA. Paspalic acid is then further converted to D-lysergic acid. Ergovaline is assembled from D-lysergic acid and three different amino acids by the D-lysergyl-peptide-synthetase composed of a monomudular (lpsB) and a trimodular (lpsA) nonribosomal peptide synthetase subunit. This Epichloe festucae var. lolii (Neotyphodium lolii) protein is FAD-linked oxidoreductase easE.